A 729-amino-acid chain; its full sequence is Catalase-peroxidase (729 aa).

The tract at residues M1 to R20 is disordered. Basic and acidic residues predominate over residues E10–R20. Positions W91–Y214 form a cross-link, tryptophyl-tyrosyl-methioninium (Trp-Tyr) (with M-240). The active-site Proton acceptor is the H92. Positions Y214 to M240 form a cross-link, tryptophyl-tyrosyl-methioninium (Tyr-Met) (with W-91). Residue H255 coordinates heme b.

Belongs to the peroxidase family. Peroxidase/catalase subfamily. In terms of assembly, homodimer or homotetramer. The cofactor is heme b. In terms of processing, formation of the three residue Trp-Tyr-Met cross-link is important for the catalase, but not the peroxidase activity of the enzyme.

The enzyme catalyses H2O2 + AH2 = A + 2 H2O. It carries out the reaction 2 H2O2 = O2 + 2 H2O. In terms of biological role, bifunctional enzyme with both catalase and broad-spectrum peroxidase activity. This Salinibacter ruber (strain DSM 13855 / M31) protein is Catalase-peroxidase.